The primary structure comprises 418 residues: Mitochondrial outer membrane protein SLC25A46 (418 aa).

A phosphoserine mark is found at Ser32 and Ser35. Thr45 is subject to Phosphothreonine. A disordered region spans residues Pro46–Gln96. The Solcar 1 repeat unit spans residues Gln96–Pro187. Transmembrane regions (helical) follow at residues Phe103 to Leu123, Phe167 to Pro187, His202 to Ile222, Leu258 to Ile278, Phe314 to Leu334, and Val382 to Ile402. The stretch at Asp311–Leu413 is one Solcar 2 repeat.

This sequence belongs to the mitochondrial carrier (TC 2.A.29) family. As to quaternary structure, associates with the mitochondrial contact site and cristae organizing system (MICOS) complex. May associate with the endoplasmic reticulum membrane protein complex (EMC).

It localises to the mitochondrion outer membrane. Transmembrane protein of the mitochondrial outer membrane that controls mitochondrial organization. May regulate the assembly of the MICOS (mitochondrial contact site and cristae organizing system) complex which is essential to the biogenesis and dynamics of mitochondrial cristae, the inwards folds of the inner mitochondrial membrane. Through its interaction with the EMC (endoplasmic reticulum membrane protein complex), could regulate mitochondrial lipid homeostasis and thereby mitochondrial fission. This is Mitochondrial outer membrane protein SLC25A46 from Mus musculus (Mouse).